Here is a 449-residue protein sequence, read N- to C-terminus: Nucleoprotein (449 aa).

Positions 1–55 are disordered; that stretch reads MSFTPGKQSSSRASSGNRSGNGILKWADQSDQSRNVQTRGRRVQSKQTATSQQPS. Residues 9–22 are compositionally biased toward low complexity; it reads SSSRASSGNRSGNG. Composition is skewed to polar residues over residues 29-38 and 45-55; these read QSDQSRNVQT and SKQTATSQQPS. Residues 52–194 are RNA-binding; sequence QQPSGGTVVP…GYYIEGSGRS (143 aa). One can recognise a CoV N NTD domain in the interval 61 to 190; the sequence is PYYSWFSGIT…VLPQGYYIEG (130 aa). Arginine 106, arginine 122, and arginine 164 together coordinate RNA. Disordered regions lie at residues 158-231, 266-297, and 387-449; these read PADI…VTPD, ILNKPRQKRSPNKQCTVQQCFGKRGPNQNFGG, and MMNI…TSEI. Serine 167 carries the post-translational modification Phosphoserine; by host. At threonine 174 the chain carries Phosphothreonine; by host. A Phosphoserine; by host modification is found at serine 191. Polar residues-rich tracts occupy residues 194–204 and 212–227; these read SAPNSRSTSRA and GSRSRANSGNRTSTPG. The region spanning 259–384 is the CoV N CTD domain; it reads AKEVRQKILN…QNLNAYQHQE (126 aa). Residues 266–276 are compositionally biased toward basic residues; that stretch reads ILNKPRQKRSP. Positions 266 to 385 are dimerization; sequence ILNKPRQKRS…NLNAYQHQED (120 aa). Serine 391 carries the post-translational modification Phosphoserine; by host. Polar residues predominate over residues 400 to 410; sequence QKNGQVENDNI. A compositionally biased stretch (basic and acidic residues) spans 423–440; sequence KSRELTAEDISLLKKMDE. Serine 424 carries the post-translational modification Phosphoserine; by host. Phosphothreonine; by host is present on threonine 428.

It belongs to the betacoronavirus nucleocapsid protein family. Homooligomer. Both monomeric and oligomeric forms interact with RNA. Interacts with protein M. Interacts with NSP3; this interaction serves to tether the genome to the newly translated replicase-transcriptase complex at a very early stage of infection. In terms of processing, ADP-ribosylated. The ADP-ribosylation is retained in the virion during infection. Phosphorylated on serine and threonine residues.

Its subcellular location is the virion. It localises to the host endoplasmic reticulum-Golgi intermediate compartment. It is found in the host Golgi apparatus. Functionally, packages the positive strand viral genome RNA into a helical ribonucleocapsid (RNP) and plays a fundamental role during virion assembly through its interactions with the viral genome and membrane protein M. Plays an important role in enhancing the efficiency of subgenomic viral RNA transcription as well as viral replication. In Sus scrofa (Pig), this protein is Nucleoprotein.